The following is a 162-amino-acid chain: uncharacterized protein (162 aa).

This is an uncharacterized protein from Bacillus subtilis (strain 168).